The chain runs to 778 residues: MDFHSVLKMAAAKPGSDGIAKRYSLAVGPPKKDPKVKGVDSAAVQAFLRKKDEESRRKETVEKRKKEDLLAKRKELKHDRKARAMASRTKDNFKGYNGIPIEEKPRKRKRSGTEEDQNDNMAAEGEEYMTEEELYEYSQSESEQEEEEELPPQKVPKPAPGKKPPTPALNFNDLLRLAERKQYEPVEVVRPVKKEERLRTAEELKELEFLERKAQKADRKDPKRNEQLVKVSKGSGDKYSSLKGTHSGNSKSSSTEQNGTIRKSSSDTGSRTEKSGSVFHTKESKKPSSAKDLGGKGSRPNVTGDGKDRHSSSQPSAASNSAFGRPSGSARPSGSSGPGRPLGGSGSSSGKSTGGSASGSARSVGGSGSGSGKPMGGSGSGKPIGGLHSSHGSGKPTGGTGSGSGKPTGASGSGSGKPTGSSGSAKSVRESGSGSRSVRESGSGSRSVRESGSGSGSARSVRESGSGSGSARSVRESGSGSGSARSVRESGSAKQAGGPGSGRALGSGSSFARPSSNSSPAPGKPAAGSGSARPSSSGTPRSSSMGHSTSNSSRQPSSSGAVRPSSGPPTGATPKGPSPRPGAGPTSVRPNSTSVPGSARSSLGSGPGRPVAASATGQLAPAKPKCTVVAETISSKNFVPKSINGHMNGIRTAAPPGHRPAMRPPGPPLPPITSSYKRRIDDDDDYDSEMDDFIDDGGECQDEISKHIREIFGYDRTKYRDESDYALRYMESTFREQQKEEARSLRLGIQEDLEELQREEEELKRKAKQLKAAKKMSR.

Disordered stretches follow at residues 1-21, 50-625, and 639-685; these read MDFHSVLKMAAAKPGSDGIAK, KKDE…AKPK, and VPKS…DDDD. The interval 1 to 665 is important for interaction with DNA; sequence MDFHSVLKMA…PGHRPAMRPP (665 aa). A coiled-coil region spans residues 44–83; the sequence is VQAFLRKKDEESRRKETVEKRKKEDLLAKRKELKHDRKAR. Positions 50–78 are enriched in basic and acidic residues; that stretch reads KKDEESRRKETVEKRKKEDLLAKRKELKH. Residues 114–135 are compositionally biased toward acidic residues; that stretch reads EEDQNDNMAAEGEEYMTEEELY. The segment covering 153 to 167 has biased composition (pro residues); the sequence is QKVPKPAPGKKPPTP. Residues 190-227 are compositionally biased toward basic and acidic residues; the sequence is RPVKKEERLRTAEELKELEFLERKAQKADRKDPKRNEQ. Positions 193-221 form a coiled coil; that stretch reads KKEERLRTAEELKELEFLERKAQKADRKD. Positions 242-269 are enriched in polar residues; the sequence is LKGTHSGNSKSSSTEQNGTIRKSSSDTG. Over residues 270 to 286 the composition is skewed to basic and acidic residues; that stretch reads SRTEKSGSVFHTKESKK. Low complexity predominate over residues 312–335; the sequence is SSQPSAASNSAFGRPSGSARPSGS. Gly residues-rich tracts occupy residues 336-357 and 365-384; these read SGPGRPLGGSGSSSGKSTGGSA and GGSGSGSGKPMGGSGSGKPI. Over residues 385–394 the composition is skewed to low complexity; the sequence is GGLHSSHGSG. Residues 395–417 are compositionally biased toward gly residues; sequence KPTGGTGSGSGKPTGASGSGSGK. Composition is skewed to low complexity over residues 418–493 and 506–559; these read PTGS…SGSA and GSGS…PSSS. The segment covering 588–604 has biased composition (polar residues); the sequence is VRPNSTSVPGSARSSLG. Over residues 662–671 the composition is skewed to pro residues; sequence MRPPGPPLPP. The segment at 666–778 is important for interaction with histones; the sequence is GPPLPPITSS…QLKAAKKMSR (113 aa). A coiled-coil region spans residues 735–778; sequence REQQKEEARSLRLGIQEDLEELQREEEELKRKAKQLKAAKKMSR.

It belongs to the SPT2 family. As to quaternary structure, interacts with histones. Interacts with a heterotetrameric complex formed by histone H3 and H4, especially when the histone tetramer is not bound to DNA.

It is found in the nucleus. It localises to the nucleolus. Functionally, histone chaperone that stabilizes pre-existing histone tetramers and regulates replication-independent histone exchange on chromatin. Required for normal chromatin refolding in the coding region of transcribed genes, and for the suppression of spurious transcription. Binds DNA and histones and promotes nucleosome assembly (in vitro). Facilitates formation of tetrameric histone complexes containing histone H3 and H4. Modulates RNA polymerase 1-mediated transcription. Binds DNA, with a preference for branched DNA species, such as Y-form DNA and Holliday junction DNA. The protein is Protein SPT2 homolog (spty2d1) of Xenopus tropicalis (Western clawed frog).